A 513-amino-acid polypeptide reads, in one-letter code: Laccase (513 aa).

Plastocyanin-like domains lie at 45 to 81 (PTRL…STHF), 101 to 178 (KTVV…HDPK), 240 to 318 (WPYL…ILAN), and 378 to 509 (QDEY…MDIT). Cu cation contacts are provided by His-105, His-107, His-153, and His-155. 8 residues coordinate Cu cation: His-419, His-422, His-424, His-491, Cys-492, His-493, His-497, and Met-502.

Belongs to the multicopper oxidase family. In terms of assembly, monomer. Requires Cu(2+) as cofactor.

It is found in the spore coat. It catalyses the reaction 4 hydroquinone + O2 = 4 benzosemiquinone + 2 H2O. It carries out the reaction 2 (4Z,15Z)-bilirubin IXalpha + O2 = 2 biliverdin IXalpha + 2 H2O. With respect to regulation, inhibited by azide. Its function is as follows. Multicopper oxidase that catalyzes the oxidation of a variety of substrates, including phenolic and non-phenolic compounds. Substrates include syringaldazine (SGZ), 2,6-dimethoxyphenol (2,6-DMP) and the non-phenolic compound 2,2'-azino-bis(3-ethylbenzothiazoline-6-sulfonic acid) (ABTS). Has no tyrosinase activity. Is implicated in the biosynthesis of a brownish pigment that characterizes sporulating colonies of B.subtilis, and which appears to be a melanin-like product and to confer protection against UV light. In terms of biological role, in vitro, also shows strong bilirubin oxidase (BOD) activity, and can catalyze the oxidation of free bilirubin (UB), direct bilirubin (conjugated with glucuronic acid, DB) and ditaurobilirubin. This chain is Laccase, found in Bacillus subtilis (strain 168).